We begin with the raw amino-acid sequence, 188 residues long: Urease accessory protein UreE (188 aa).

The interval 142–174 is disordered; it reads AYQSQAGAGHHHHHDHDHGHSHDHSHTHSHADS. A compositionally biased stretch (basic and acidic residues) spans 157-172; it reads HDHGHSHDHSHTHSHA.

The protein belongs to the UreE family.

The protein resides in the cytoplasm. Functionally, involved in urease metallocenter assembly. Binds nickel. Probably functions as a nickel donor during metallocenter assembly. The protein is Urease accessory protein UreE of Tolumonas auensis (strain DSM 9187 / NBRC 110442 / TA 4).